The following is a 548-amino-acid chain: Chaperonin GroEL 2 (548 aa).

ATP is bound by residues 29–32 (TLGP), 86–90 (DGTTT), Gly-418, 482–484 (NAA), and Asp-498.

This sequence belongs to the chaperonin (HSP60) family. In terms of assembly, forms a cylinder of 14 subunits composed of two heptameric rings stacked back-to-back. Interacts with the co-chaperonin GroES.

The protein resides in the cytoplasm. The catalysed reaction is ATP + H2O + a folded polypeptide = ADP + phosphate + an unfolded polypeptide.. Its function is as follows. Together with its co-chaperonin GroES, plays an essential role in assisting protein folding. The GroEL-GroES system forms a nano-cage that allows encapsulation of the non-native substrate proteins and provides a physical environment optimized to promote and accelerate protein folding. This is Chaperonin GroEL 2 from Corynebacterium glutamicum (strain ATCC 13032 / DSM 20300 / JCM 1318 / BCRC 11384 / CCUG 27702 / LMG 3730 / NBRC 12168 / NCIMB 10025 / NRRL B-2784 / 534).